Consider the following 417-residue polypeptide: Carboxypeptidase B (417 aa).

An N-terminal signal peptide occupies residues 1 to 16 (MLAFLILVTVTLASAH). Positions 17 to 110 (HSGEHFEGDK…LEAQFDSRVR (94 aa)) are cleaved as a propeptide — activation peptide. Residues 118–412 (KYNNWETIEA…LAIKYVTSYV (295 aa)) form the Peptidase M14 domain. An intrachain disulfide couples cysteine 173 to cysteine 186. Zn(2+) is bound by residues histidine 176 and glutamate 179. Substrate-binding positions include 176–179 (HARE), arginine 234, and 251–252 (NR). Disulfide bonds link cysteine 245–cysteine 268 and cysteine 259–cysteine 273. Histidine 304 is a binding site for Zn(2+). Substrate contacts are provided by residues 305–306 (SY) and tyrosine 356. The Proton donor/acceptor role is filled by glutamate 378.

The protein belongs to the peptidase M14 family. Zn(2+) is required as a cofactor.

The protein resides in the secreted. It is found in the zymogen granule lumen. It carries out the reaction Preferential release of a C-terminal lysine or arginine amino acid.. This Bos taurus (Bovine) protein is Carboxypeptidase B (CPB1).